The primary structure comprises 161 residues: Protein PLASTID TRANSCRIPTIONALLY ACTIVE 7 (161 aa).

A chloroplast-targeting transit peptide spans 1 to 32 (MASFTCSSPSSILPIIDTRSGNLRCTFQSQVS).

Component of the transcriptionally active chromosome (TAC) complexes. Interacts with FLN1, PTAC10, PTAC12/HMR/PAP5 and PTAC14. Binds to SL1/MTERF3. As to expression, mostly expressed in leaves, flowers and seedlings, and, to a lower extent, in roots and stems.

The protein resides in the plastid. It is found in the chloroplast. Its function is as follows. Essential for chloroplast development, especially for thylakoid formation. Involved in plastid gene expression, probably by maintaining plastid-encoded RNA polymerase (PEP) activity. The chain is Protein PLASTID TRANSCRIPTIONALLY ACTIVE 7 from Arabidopsis thaliana (Mouse-ear cress).